A 479-amino-acid polypeptide reads, in one-letter code: Replication factor C large subunit (479 aa).

56-63 (GPPGVGKT) is a binding site for ATP. Residues 435 to 461 (LGEKPLEPQEAKARRRGEKASRDEGRK) are compositionally biased toward basic and acidic residues. Positions 435 to 479 (LGEKPLEPQEAKARRRGEKASRDEGRKAGKRERKGVGLDFFLGEQ) are disordered.

It belongs to the activator 1 small subunits family. RfcL subfamily. In terms of assembly, heteromultimer composed of small subunits (RfcS) and large subunits (RfcL).

Its function is as follows. Part of the RFC clamp loader complex which loads the PCNA sliding clamp onto DNA. This is Replication factor C large subunit from Aeropyrum pernix (strain ATCC 700893 / DSM 11879 / JCM 9820 / NBRC 100138 / K1).